A 25-amino-acid chain; its full sequence is Germin-like protein (25 aa).

The protein belongs to the germin family. In terms of assembly, oligomer (believed to be a pentamer but probably hexamer). In terms of processing, the three different mass spectrometry results appear to arise from different glycosylation variants.

It localises to the secreted. The protein resides in the extracellular space. It is found in the apoplast. May play a role in plant defense. Probably has no oxalate oxidase activity even if the active site is conserved. This is Germin-like protein from Citrus sinensis (Sweet orange).